Consider the following 213-residue polypeptide: 3-isopropylmalate dehydratase small subunit (213 aa).

It belongs to the LeuD family. LeuD type 1 subfamily. Heterodimer of LeuC and LeuD.

The catalysed reaction is (2R,3S)-3-isopropylmalate = (2S)-2-isopropylmalate. Its pathway is amino-acid biosynthesis; L-leucine biosynthesis; L-leucine from 3-methyl-2-oxobutanoate: step 2/4. Functionally, catalyzes the isomerization between 2-isopropylmalate and 3-isopropylmalate, via the formation of 2-isopropylmaleate. The sequence is that of 3-isopropylmalate dehydratase small subunit from Neisseria meningitidis serogroup A / serotype 4A (strain DSM 15465 / Z2491).